Here is a 251-residue protein sequence, read N- to C-terminus: Diphthine synthase (251 aa).

S-adenosyl-L-methionine is bound by residues leucine 9, aspartate 84, valine 87, 112 to 113 (SI), leucine 160, alanine 194, and histidine 219.

Belongs to the diphthine synthase family. As to quaternary structure, homodimer.

The enzyme catalyses 2-[(3S)-amino-3-carboxypropyl]-L-histidyl-[translation elongation factor 2] + 3 S-adenosyl-L-methionine = diphthine-[translation elongation factor 2] + 3 S-adenosyl-L-homocysteine + 3 H(+). The protein operates within protein modification; peptidyl-diphthamide biosynthesis. Its function is as follows. S-adenosyl-L-methionine-dependent methyltransferase that catalyzes the trimethylation of the amino group of the modified target histidine residue in translation elongation factor 2 (EF-2), to form an intermediate called diphthine. The three successive methylation reactions represent the second step of diphthamide biosynthesis. This Archaeoglobus fulgidus (strain ATCC 49558 / DSM 4304 / JCM 9628 / NBRC 100126 / VC-16) protein is Diphthine synthase.